Reading from the N-terminus, the 99-residue chain is Plastocyanin (99 aa).

A Plastocyanin-like domain is found at 1 to 99 (LDVLLGSDDG…AGMVGKVTVN (99 aa)). Residues His-37, Cys-84, His-87, and Met-92 each contribute to the Cu cation site.

Belongs to the plastocyanin family. Requires Cu(2+) as cofactor.

It localises to the plastid. The protein resides in the chloroplast thylakoid membrane. In terms of biological role, participates in electron transfer between P700 and the cytochrome b6-f complex in photosystem I. The chain is Plastocyanin (PETE) from Mercurialis perennis (Dog's mercury).